The chain runs to 402 residues: E3 ubiquitin-protein ligase makorin-2 (402 aa).

3 C3H1-type zinc fingers span residues 2 to 29 (TTKQVTCRYFLHGVCREGNHCQFSHDPS), 31 to 58 (SKPSTICKFYQRGTCAYGERCRYDHVKL), and 141 to 168 (QDLPRLCPYAAVGHCYYEENCIYLHGDK). Residues 169–198 (CEVCGLQVLDPHNPEQRSMHEKMCLLAFEA) form a makorin-type Cys-His region. The segment at 214-268 (CSICMEVVVQKMNPSDRRFGILSSCCHVFCLACIRKWRCTRNFSNKIIKSCPECR) adopts an RING-type zinc-finger fold. The C3H1-type 4 zinc finger occupies 297–326 (GVGKKPCKYFDQGRGSCPFGGKCLYLHALP).

The protein localises to the cytoplasm. It localises to the nucleus. It carries out the reaction S-ubiquitinyl-[E2 ubiquitin-conjugating enzyme]-L-cysteine + [acceptor protein]-L-lysine = [E2 ubiquitin-conjugating enzyme]-L-cysteine + N(6)-ubiquitinyl-[acceptor protein]-L-lysine.. It functions in the pathway protein modification; protein ubiquitination. Its function is as follows. E3 ubiquitin ligase catalyzing the covalent attachment of ubiquitin moieties onto substrate proteins. Inhibits neurogenesis and axis formation during embryonic development by modulating the phosphatidylinositol 3-kinase (PI3K) pathway. Acts downstream of PI3K and akt1 to up-regulate gsk3b mRNA expression. The polypeptide is E3 ubiquitin-protein ligase makorin-2 (Takifugu rubripes (Japanese pufferfish)).